A 183-amino-acid chain; its full sequence is MGEVVTKSGGAVHTGGQPLEVSKDGLRFFPGAGAVIGPLNALVNWGRAGSIWPVTFGLACCAIEMMATGAAHHDLDRFGIIFRASPRQADCMVVAGTLSKKMAPVLRRVYDQMPEPRYVLAMGSCACSGGLFQSYAVTQGVDQVVPVDVYVPGCPPRPEALFDGFIRLQEIINKEQMRWSPWR.

Residues Cys60, Cys61, Cys125, and Cys154 each contribute to the [4Fe-4S] cluster site.

This sequence belongs to the complex I 20 kDa subunit family. NDH-1 is composed of 14 different subunits. Subunits NuoB, C, D, E, F, and G constitute the peripheral sector of the complex. [4Fe-4S] cluster is required as a cofactor.

It is found in the cell inner membrane. The catalysed reaction is a quinone + NADH + 5 H(+)(in) = a quinol + NAD(+) + 4 H(+)(out). In terms of biological role, NDH-1 shuttles electrons from NADH, via FMN and iron-sulfur (Fe-S) centers, to quinones in the respiratory chain. The immediate electron acceptor for the enzyme in this species is believed to be ubiquinone. Couples the redox reaction to proton translocation (for every two electrons transferred, four hydrogen ions are translocated across the cytoplasmic membrane), and thus conserves the redox energy in a proton gradient. The polypeptide is NADH-quinone oxidoreductase subunit B (Desulfovibrio desulfuricans (strain ATCC 27774 / DSM 6949 / MB)).